We begin with the raw amino-acid sequence, 503 residues long: Protein DETOXIFICATION 36 (503 aa).

The next 12 membrane-spanning stretches (helical) occupy residues 54–74, 87–107, 137–157, 166–186, 203–223, 225–245, 271–293, 313–333, 355–375, 399–419, 427–447, and 456–476; these read LFHL…MSML, LAAA…LMLG, IVLV…KPLL, VASV…AYAV, SAYI…LSVF, FGWG…IIVL, GLWD…SWYS, LAIC…FNAA, AVTT…ILSW, FLAI…VAVG, AYVN…VLGF, and IWTG…IVTF.

This sequence belongs to the multi antimicrobial extrusion (MATE) (TC 2.A.66.1) family.

Its subcellular location is the membrane. This chain is Protein DETOXIFICATION 36, found in Arabidopsis thaliana (Mouse-ear cress).